We begin with the raw amino-acid sequence, 323 residues long: Breast cancer metastasis-suppressor 1-like protein-A (323 aa).

Residues 1–15 show a composition bias toward basic and acidic residues; that stretch reads MPVHSREKKESNHEE. Positions 1–52 are disordered; sequence MPVHSREKKESNHEEMEVDFAEQEGSSSEDEDTESSSVSEDGESSEMDDEDC. Over residues 16–51 the composition is skewed to acidic residues; it reads MEVDFAEQEGSSSEDEDTESSSVSEDGESSEMDDED. Coiled coils occupy residues 50–81 and 156–178; these read EDCE…YKER and QTEL…ITSE.

The protein belongs to the BRMS1 family.

It localises to the nucleus. In terms of biological role, involved in the histone deacetylase (HDAC1)-dependent transcriptional repression activity. The polypeptide is Breast cancer metastasis-suppressor 1-like protein-A (brms1la) (Danio rerio (Zebrafish)).